Here is a 353-residue protein sequence, read N- to C-terminus: MLRVLGIESSCDETAAAVVEGAEHGHPHGVVVRSNVVWSQLEVHALYGGVVPELASRAHIRHIQPVIEQALAEAGVRPQQLDAIAVTVAPGLVGALLVGVAAAQGLAVALDKPLVPVHHMEGHLMSPFLMAGVVPAMEFPFVALLVSGGHTLLLHARDFGDYQLLGQTRDDAVGEAFDKGARMLGLGYPGGPEVAALAQSGDRQAVAFPRVLLDRSQFDFSFSGLKTALRTHLLKFPPESGGPSLADVAASYQEAIVDTLVIKSLSACRHVGVSRLVIAGGVGANRRLREKLAKQALKQGVQLYAPPIHLCTDNGAMIASAGVCRLARGDQARGVVNAVPRLPIHELEKIYGR.

Residues H119 and H123 each coordinate Fe cation. Residues 145–149 (LVSGG), D178, G191, and N285 each bind substrate. D313 contributes to the Fe cation binding site.

This sequence belongs to the KAE1 / TsaD family. Requires Fe(2+) as cofactor.

The protein localises to the cytoplasm. It catalyses the reaction L-threonylcarbamoyladenylate + adenosine(37) in tRNA = N(6)-L-threonylcarbamoyladenosine(37) in tRNA + AMP + H(+). Required for the formation of a threonylcarbamoyl group on adenosine at position 37 (t(6)A37) in tRNAs that read codons beginning with adenine. Is involved in the transfer of the threonylcarbamoyl moiety of threonylcarbamoyl-AMP (TC-AMP) to the N6 group of A37, together with TsaE and TsaB. TsaD likely plays a direct catalytic role in this reaction. In Magnetococcus marinus (strain ATCC BAA-1437 / JCM 17883 / MC-1), this protein is tRNA N6-adenosine threonylcarbamoyltransferase.